The following is a 366-amino-acid chain: Ribosomal RNA large subunit methyltransferase M (366 aa).

Residues Ser188, 221-224 (CPGG), Asp240, Asp260, and Asp277 contribute to the S-adenosyl-L-methionine site. Lys306 serves as the catalytic Proton acceptor.

It belongs to the class I-like SAM-binding methyltransferase superfamily. RNA methyltransferase RlmE family. RlmM subfamily. As to quaternary structure, monomer.

It localises to the cytoplasm. The enzyme catalyses cytidine(2498) in 23S rRNA + S-adenosyl-L-methionine = 2'-O-methylcytidine(2498) in 23S rRNA + S-adenosyl-L-homocysteine + H(+). In terms of biological role, catalyzes the 2'-O-methylation at nucleotide C2498 in 23S rRNA. This is Ribosomal RNA large subunit methyltransferase M from Photorhabdus sp. (strain Az29).